Here is a 97-residue protein sequence, read N- to C-terminus: Small ribosomal subunit protein bS6 (97 aa).

This sequence belongs to the bacterial ribosomal protein bS6 family.

Functionally, binds together with bS18 to 16S ribosomal RNA. This Lactococcus lactis subsp. cremoris (strain MG1363) protein is Small ribosomal subunit protein bS6.